We begin with the raw amino-acid sequence, 450 residues long: Phosphoglucosamine mutase (450 aa).

Catalysis depends on Ser101, which acts as the Phosphoserine intermediate. Positions 101, 240, 242, and 244 each coordinate Mg(2+). Phosphoserine is present on Ser101.

It belongs to the phosphohexose mutase family. Mg(2+) is required as a cofactor. Activated by phosphorylation.

It catalyses the reaction alpha-D-glucosamine 1-phosphate = D-glucosamine 6-phosphate. Functionally, catalyzes the conversion of glucosamine-6-phosphate to glucosamine-1-phosphate. The chain is Phosphoglucosamine mutase from Streptococcus thermophilus (strain ATCC BAA-250 / LMG 18311).